The chain runs to 585 residues: uncharacterized protein (585 aa).

Helical transmembrane passes span 18–38, 55–75, 128–148, 150–170, 238–258, and 276–296; these read FMWSLLAMLLMTAITVVYPII, AAWVSLGFIAVMVLKGMATFF, FFLSYGLAELIRFGLLVAISL, VMFYYSVPLTLVTIAVLPFLA, IWSAYFPLMEFIGNTCIVALL, and VAFFSLVNYMMWPIMNLGFVI. Residues 18-301 enclose the ABC transmembrane type-1 domain; that stretch reads FMWSLLAMLL…LGFVINMFSQ (284 aa). One can recognise an ABC transporter domain in the interval 335 to 570; sequence VHFKNVSLAY…GGYYKKIYDL (236 aa). Residue 369 to 376 coordinates ATP; sequence GPTGSGKS.

The protein belongs to the ABC transporter superfamily.

The protein localises to the cell membrane. This is an uncharacterized protein from Bacillus subtilis (strain 168).